Here is a 110-residue protein sequence, read N- to C-terminus: uncharacterized protein (110 aa).

Positions M1 to A19 are cleaved as a signal peptide. N101 carries an N-linked (GlcNAc...) asparagine glycan.

Component of the acid-soluble and acid-insoluble organic matrix of prismatic shell layers (at protein level).

It localises to the secreted. This is an uncharacterized protein from Haliotis asinina (Donkey's ear abalone).